Reading from the N-terminus, the 336-residue chain is MKLAVIPGDGIGVEVTAEALKVLRKLVPDLETTEYDLGARRYNATGELLPDADLAAIREHDAILLGAIGDPSVTPGVLERGLLLNMRFALDHHVNLRPSQLYPGSKSPLAAQPDIDFVVVREGTEGPYTGNGGAIRVGTPHEIATEVSINTWFGAERVVRYAFALAQTRRKHVTLIHKTNVLSNAGAIWTRAVETVSAEYPDVETAYCHIDAATIYMVTDPSRFDVIVTDNLFGDIITDLAGAVTGGIGLAASGNIDASGTNPSMFEPVHGSAPDIAGQGIADPTAAILSAALLLRHLGRDGDAARIETAVEADLASRGDSKVVTSEVGDRIAAAL.

Arg-87, Arg-97, Arg-121, and Asp-211 together coordinate substrate. Mg(2+) contacts are provided by Asp-211, Asp-235, and Asp-239. 271 to 283 (GSAPDIAGQGIAD) is an NAD(+) binding site.

The protein belongs to the isocitrate and isopropylmalate dehydrogenases family. LeuB type 2 subfamily. In terms of assembly, homodimer. Requires Mg(2+) as cofactor. Mn(2+) is required as a cofactor.

The protein resides in the cytoplasm. It catalyses the reaction (2R,3S)-3-isopropylmalate + NAD(+) = 4-methyl-2-oxopentanoate + CO2 + NADH. It functions in the pathway amino-acid biosynthesis; L-leucine biosynthesis; L-leucine from 3-methyl-2-oxobutanoate: step 3/4. Its function is as follows. Catalyzes the oxidation of 3-carboxy-2-hydroxy-4-methylpentanoate (3-isopropylmalate) to 3-carboxy-4-methyl-2-oxopentanoate. The product decarboxylates to 4-methyl-2 oxopentanoate. The polypeptide is 3-isopropylmalate dehydrogenase (Rhodococcus opacus (strain B4)).